Reading from the N-terminus, the 417-residue chain is Phosphatidylcholine:ceramide cholinephosphotransferase 1 (417 aa).

An SAM domain is found at 11–74 (WSPEEVTNWL…LHMIETLKMA (64 aa)). 5 helical membrane passes run 140–160 (FLAFIYALFCFIFTTVTISVV), 188–208 (FSICEINGMILVGLWLVQWLL), 219–239 (FFCIVCTLYLYRCITMYVTTL), 280–300 (MCGDYLYSGHTVILTLTYLFI), and 308–328 (LWWYHWLCWTLSMVGMFCILL). H289 is a catalytic residue. The Cytoplasmic portion of the chain corresponds to 329 to 417 (AHDHYTVDVV…VKYSRLVNDT (89 aa)). Residues H332 and D336 contribute to the active site.

Belongs to the sphingomyelin synthase family.

The protein localises to the golgi apparatus membrane. It carries out the reaction an N-acylsphing-4-enine + a 1,2-diacyl-sn-glycero-3-phosphocholine = a sphingomyelin + a 1,2-diacyl-sn-glycerol. The catalysed reaction is an N-acylsphing-4-enine + a 1,2-diacyl-sn-glycero-3-phosphoethanolamine = an N-acylsphing-4-enine 1-phosphoethanolamine + a 1,2-diacyl-sn-glycerol. Its function is as follows. Major sphingomyelin synthase at the Golgi apparatus. Catalyzes the reversible transfer of phosphocholine moiety in sphingomyelin biosynthesis: in the forward reaction transfers phosphocholine head group of phosphatidylcholine (PC) on to ceramide (CER) to form ceramide phosphocholine (sphingomyelin, SM) and diacylglycerol (DAG) as by-product, and in the reverse reaction transfers phosphocholine from SM to DAG to form PC and CER. The direction of the reaction depends on the levels of CER and DAG in Golgi membranes. Converts the newly synthesized CER, that is transported from the endoplasmic reticulum to the trans-Golgi by the Cer transport protein (CERT), to SM. Can form a heteromeric complex with glucosylceramide synthase (GCS) increasing SMS activity and reducing glucosylceramide synthesis, a critical mechanism that controls the metabolic fate of CER in the Golgi. Does not use free phosphorylcholine or CDP-choline as donor. Can also transfer phosphoethanolamine head group of phosphatidylethanolamine (PE) on to CER to form ceramide phosphoethanolamine (CPE). Regulates receptor-mediated signal transduction via mitogenic DAG and proapoptotic CER, as well as via SM, a structural component of membrane rafts that serve as platforms for signal transduction and protein sorting. Plays a role in secretory transport via regulation of DAG pool at the Golgi apparatus and its downstream effects on PRKD1. This Gallus gallus (Chicken) protein is Phosphatidylcholine:ceramide cholinephosphotransferase 1 (SGMS1).